The sequence spans 209 residues: Imidazole glycerol phosphate synthase subunit HisH (209 aa).

A Glutamine amidotransferase type-1 domain is found at 1 to 205; that stretch reads MIAIIDYGMG…QGVVEAWKSS (205 aa). Cysteine 79 functions as the Nucleophile in the catalytic mechanism. Residues histidine 180 and glutamate 182 contribute to the active site.

In terms of assembly, heterodimer of HisH and HisF.

The protein localises to the cytoplasm. It carries out the reaction 5-[(5-phospho-1-deoxy-D-ribulos-1-ylimino)methylamino]-1-(5-phospho-beta-D-ribosyl)imidazole-4-carboxamide + L-glutamine = D-erythro-1-(imidazol-4-yl)glycerol 3-phosphate + 5-amino-1-(5-phospho-beta-D-ribosyl)imidazole-4-carboxamide + L-glutamate + H(+). The enzyme catalyses L-glutamine + H2O = L-glutamate + NH4(+). Its pathway is amino-acid biosynthesis; L-histidine biosynthesis; L-histidine from 5-phospho-alpha-D-ribose 1-diphosphate: step 5/9. Its function is as follows. IGPS catalyzes the conversion of PRFAR and glutamine to IGP, AICAR and glutamate. The HisH subunit catalyzes the hydrolysis of glutamine to glutamate and ammonia as part of the synthesis of IGP and AICAR. The resulting ammonia molecule is channeled to the active site of HisF. In Bacillus cereus (strain B4264), this protein is Imidazole glycerol phosphate synthase subunit HisH.